The following is a 943-amino-acid chain: Isoleucine--tRNA ligase (943 aa).

Residues 58–68 (PYANGSIHIGH) carry the 'HIGH' region motif. Position 567 (glutamate 567) interacts with L-isoleucyl-5'-AMP. The 'KMSKS' region motif lies at 608–612 (KMSKS). Lysine 611 lines the ATP pocket. The Zn(2+) site is built by cysteine 906, cysteine 909, cysteine 926, and cysteine 929.

It belongs to the class-I aminoacyl-tRNA synthetase family. IleS type 1 subfamily. Monomer. The cofactor is Zn(2+).

It is found in the cytoplasm. The catalysed reaction is tRNA(Ile) + L-isoleucine + ATP = L-isoleucyl-tRNA(Ile) + AMP + diphosphate. Its function is as follows. Catalyzes the attachment of isoleucine to tRNA(Ile). As IleRS can inadvertently accommodate and process structurally similar amino acids such as valine, to avoid such errors it has two additional distinct tRNA(Ile)-dependent editing activities. One activity is designated as 'pretransfer' editing and involves the hydrolysis of activated Val-AMP. The other activity is designated 'posttransfer' editing and involves deacylation of mischarged Val-tRNA(Ile). In Pseudomonas aeruginosa (strain ATCC 15692 / DSM 22644 / CIP 104116 / JCM 14847 / LMG 12228 / 1C / PRS 101 / PAO1), this protein is Isoleucine--tRNA ligase.